A 179-amino-acid chain; its full sequence is Large ribosomal subunit protein uL5 (179 aa).

It belongs to the universal ribosomal protein uL5 family. As to quaternary structure, part of the 50S ribosomal subunit; part of the 5S rRNA/L5/L18/L25 subcomplex. Contacts the 5S rRNA and the P site tRNA. Forms a bridge to the 30S subunit in the 70S ribosome.

In terms of biological role, this is one of the proteins that bind and probably mediate the attachment of the 5S RNA into the large ribosomal subunit, where it forms part of the central protuberance. In the 70S ribosome it contacts protein S13 of the 30S subunit (bridge B1b), connecting the 2 subunits; this bridge is implicated in subunit movement. Contacts the P site tRNA; the 5S rRNA and some of its associated proteins might help stabilize positioning of ribosome-bound tRNAs. The protein is Large ribosomal subunit protein uL5 of Bordetella petrii (strain ATCC BAA-461 / DSM 12804 / CCUG 43448).